The sequence spans 101 residues: Protein SSXA1 (101 aa).

Residues 19–83 (ETCQAFEDIS…ERVTKSVLSD (65 aa)) enclose the KRAB-related domain. The tract at residues 73–101 (KERVTKSVLSDSDEVSSHESQDKRKNPVV) is disordered. Positions 87–101 (VSSHESQDKRKNPVV) are enriched in basic and acidic residues.

The protein belongs to the SSX family. Specifically expressed in testis (at protein level). Not detected in other tissues tested (at protein level).

It is found in the nucleus. Functionally, could act as a modulator of transcription. In Mus musculus (Mouse), this protein is Protein SSXA1.